Consider the following 405-residue polypeptide: L-rhamnonate dehydratase (405 aa).

Positions 33 and 59 each coordinate substrate. 3 residues coordinate Mg(2+): D226, E252, and E280. H329 (proton acceptor) is an active-site residue. E349 serves as a coordination point for substrate.

This sequence belongs to the mandelate racemase/muconate lactonizing enzyme family. RhamD subfamily. As to quaternary structure, homooctamer; tetramer of dimers. Mg(2+) serves as cofactor.

The catalysed reaction is L-rhamnonate = 2-dehydro-3-deoxy-L-rhamnonate + H2O. In terms of biological role, catalyzes the dehydration of L-rhamnonate to 2-keto-3-deoxy-L-rhamnonate (KDR). The chain is L-rhamnonate dehydratase from Escherichia coli O6:H1 (strain CFT073 / ATCC 700928 / UPEC).